A 115-amino-acid chain; its full sequence is Large ribosomal subunit protein bL19 (115 aa).

It belongs to the bacterial ribosomal protein bL19 family.

Functionally, this protein is located at the 30S-50S ribosomal subunit interface and may play a role in the structure and function of the aminoacyl-tRNA binding site. The sequence is that of Large ribosomal subunit protein bL19 from Enterobacter sp. (strain 638).